The following is an 87-amino-acid chain: uncharacterized protein (87 aa).

Residues 1–23 (MAVSVLRLTVVLGLLVLFLTCYA) form the signal peptide. Positions 24–44 (DDKPDKPDDKPDDSGKDPKPD) are disordered.

The protein resides in the secreted. This is an uncharacterized protein from Homo sapiens (Human).